The sequence spans 273 residues: MNNRVHQGHLARKRFGQNFLNDQFVIDSIVSAINPQKGQAMVEIGPGLAALTEPVGERLDQLTVIELDRDLAARLQTHPFLGPKLTIYQQDAMTFNFGELAEKMGQPLRVFGNLPYNISTPLMFHLFSYTDAIADMHFMLQKEVVNRLVAGPNSKAYGRLSVMAQYYCNVIPVLEVPPSAFTPPPKVDSAVVRLVPHATMPHPVKDVRVLSRITTEAFNQRRKTIRNSLGNLFSVEVLTGMGIDPAMRAENISVAQYCQMANYLAENAPLQES.

Residues N18, L20, G45, E66, D91, and N113 each coordinate S-adenosyl-L-methionine.

The protein belongs to the class I-like SAM-binding methyltransferase superfamily. rRNA adenine N(6)-methyltransferase family. RsmA subfamily.

The protein resides in the cytoplasm. The enzyme catalyses adenosine(1518)/adenosine(1519) in 16S rRNA + 4 S-adenosyl-L-methionine = N(6)-dimethyladenosine(1518)/N(6)-dimethyladenosine(1519) in 16S rRNA + 4 S-adenosyl-L-homocysteine + 4 H(+). Specifically dimethylates two adjacent adenosines (A1518 and A1519) in the loop of a conserved hairpin near the 3'-end of 16S rRNA in the 30S particle. May play a critical role in biogenesis of 30S subunits. This is Ribosomal RNA small subunit methyltransferase A from Shigella boydii serotype 4 (strain Sb227).